The primary structure comprises 222 residues: Methylthioribulose-1-phosphate dehydratase (222 aa).

H94 and H96 together coordinate Zn(2+).

It belongs to the aldolase class II family. MtnB subfamily. It depends on Zn(2+) as a cofactor.

It carries out the reaction 5-(methylsulfanyl)-D-ribulose 1-phosphate = 5-methylsulfanyl-2,3-dioxopentyl phosphate + H2O. The protein operates within amino-acid biosynthesis; L-methionine biosynthesis via salvage pathway; L-methionine from S-methyl-5-thio-alpha-D-ribose 1-phosphate: step 2/6. Functionally, catalyzes the dehydration of methylthioribulose-1-phosphate (MTRu-1-P) into 2,3-diketo-5-methylthiopentyl-1-phosphate (DK-MTP-1-P). The polypeptide is Methylthioribulose-1-phosphate dehydratase (Yersinia pseudotuberculosis serotype IB (strain PB1/+)).